Reading from the N-terminus, the 159-residue chain is MKNHLLFWGVLAVFIKAVHVKAQEDERIVLVDNKCKCARITSRIIRSSEDPNEDIVERNIRIIVPLNNRENISDPTSPLRTRFVYHLSDLCKKCDPTEVELDNQIVTATQSNICDEDSATETCYTYDRNKCYTAVVPLVYGGETKMVETALTPDACYPD.

A signal peptide spans 1–22; that stretch reads MKNHLLFWGVLAVFIKAVHVKA. Position 23 is a pyrrolidone carboxylic acid (Q23). Cystine bridges form between C35–C123, C94–C114, and C131–C156. The N-linked (GlcNAc...) (complex) asparagine glycan is linked to N71.

As to quaternary structure, part of the secretory IgA (sIgA) complex that consists of two, four or five IgA monomers, and two additional non-Ig polypeptides, namely the JCHAIN and the secretory component (the proteolytic product of PIGR). Part of the secretory IgM (sIgM) complex that consists of five IgM monomers, and two additional non-Ig polypeptides, namely the JCHAIN and the secretory component (the proteolytic product of PIGR). JCHAIN-containing IgM interacts (via CH4 domain) with FCRM (via Ig-like domain).

The protein localises to the secreted. Its function is as follows. Serves to link two monomer units of either IgM or IgA. In the case of IgM, the J chain-joined dimer is a nucleating unit for the IgM pentamer, and in the case of IgA it induces dimers and/or larger polymers. It also helps to bind these immunoglobulins to secretory component. The protein is Immunoglobulin J chain of Homo sapiens (Human).